A 521-amino-acid chain; its full sequence is Maturase K (521 aa).

This sequence belongs to the intron maturase 2 family. MatK subfamily.

It is found in the plastid. Its subcellular location is the chloroplast. Its function is as follows. Usually encoded in the trnK tRNA gene intron. Probably assists in splicing its own and other chloroplast group II introns. The sequence is that of Maturase K from Trillium catesbaei (Catesby's trillium).